The following is a 342-amino-acid chain: 4-hydroxy-2-oxovalerate aldolase (342 aa).

The Pyruvate carboxyltransferase domain maps to 8 to 260 (ITVHDMTLRD…ATGVDLFKMQ (253 aa)). 16–17 (RD) is a substrate binding site. Mn(2+) is bound at residue Asp-17. His-20 acts as the Proton acceptor in catalysis. The substrate site is built by Ser-170 and His-199. Residues His-199 and His-201 each coordinate Mn(2+). Tyr-290 contributes to the substrate binding site.

Belongs to the 4-hydroxy-2-oxovalerate aldolase family.

The catalysed reaction is (S)-4-hydroxy-2-oxopentanoate = acetaldehyde + pyruvate. This chain is 4-hydroxy-2-oxovalerate aldolase, found in Albidiferax ferrireducens (strain ATCC BAA-621 / DSM 15236 / T118) (Rhodoferax ferrireducens).